Here is a 607-residue protein sequence, read N- to C-terminus: MASTANMISQLKKLSIAEPAVAKDSHPDVNIVDLMRNYISQELSKISGVDSSLIFPALEWTNTMERGDLLIPIPRLRIKGANPKDLAVQWAEKFPCGDFLEKVEANGPFIQFFFNPQFLAKLVIPDILTRKEDYGSCKLVENKKVIIEFSSPNIAKPFHAGHLRSTIIGGFLANLYEKLGWEVIRMNYLGDWGKQFGLLAVGFERYGNEEALVKDPIHHLFDVYVRINKDIEEEGDSIPLEQSTNGKAREYFKRMEDGDEEALKIWKRFREFSIEKYIDTYARLNIKYDVYSGESQVSKESMLKAIDLFKEKGLTHEDKGAVLIDLTKFNKKLGKAIVQKSDGTTLYLTRDVGAAMDRYEKYHFDKMIYVIASQQDLHAAQFFEILKQMGFEWAKDLQHVNFGMVQGMSTRKGTVVFLDNILEETKEKMHEVMKKNENKYAQIEHPEEVADLVGISAVMIQDMQGKRINNYEFKWERMLSFEGDTGPYLQYAHSRLRSVERNASGITQEKWINADFSLLKEPAAKLLIRLLGQYPDVLRNAIKTHEPTTVVTYLFKLTHQVSSCYDVLWVAGQTEELATARLALYGAARQVLYNGMRLLGLTPVERM.

An N-acetylalanine modification is found at Ala2. Ser15 carries the post-translational modification Phosphoserine. 2 interaction with tRNA regions span residues 59 to 60 and 106 to 111; these read EW and NGPFIQ. Residues 148–153, His162, Tyr347, Asp351, and Gln375 contribute to the L-arginine site; that span reads EFSSPN. Residues 151–162 carry the 'HIGH' region motif; that stretch reads SPNIAKPFHAGH. The segment at 484 to 498 is interaction with tRNA; the sequence is DTGPYLQYAHSRLRS.

This sequence belongs to the class-I aminoacyl-tRNA synthetase family. As to quaternary structure, monomer.

Its subcellular location is the cytoplasm. The protein localises to the cytosol. The catalysed reaction is tRNA(Arg) + L-arginine + ATP = L-arginyl-tRNA(Arg) + AMP + diphosphate. In terms of biological role, forms part of a macromolecular complex that catalyzes the attachment of specific amino acids to cognate tRNAs during protein synthesis. The chain is Arginine--tRNA ligase, cytoplasmic from Saccharomyces cerevisiae (strain ATCC 204508 / S288c) (Baker's yeast).